The sequence spans 115 residues: U3-lycotoxin-Ls1k (115 aa).

The N-terminal stretch at Met1–Ala20 is a signal peptide. Residues Glu21–Arg44 constitute a propeptide that is removed on maturation. Intrachain disulfides connect Cys48-Cys63, Cys55-Cys72, Cys62-Cys87, and Cys74-Cys85.

Belongs to the neurotoxin 19 (CSTX) family. 01 subfamily. As to expression, expressed by the venom gland.

It localises to the secreted. The chain is U3-lycotoxin-Ls1k from Lycosa singoriensis (Wolf spider).